We begin with the raw amino-acid sequence, 352 residues long: C-glycoside deglycosidase alpha subunit (352 aa).

Glu-147 is a binding site for Mn(2+). The Proton acceptor role is filled by His-149. Asp-179, His-269, and Glu-305 together coordinate Mn(2+).

The protein belongs to the C-glycoside deglycosidase alpha subunit family. In terms of assembly, heterodimer composed of an alpha subunit (CarB2) and a beta subunit (CarC2). It depends on a divalent metal cation as a cofactor.

It carries out the reaction 3''-dehydroorientin = 1,5-anhydro-D-erythro-hex-1-en-3-ulose + luteolin. Activity is strongly reduced in the presence of chelating agents. Functionally, carbon-carbon bond-cleaving enzyme which participates in the metabolism of C-glycosides. Acts on the C8-glycosylated compound 3''-dehydroorientin (3''-oxo-orientin). This Arthrobacter globiformis (strain ATCC 8010 / DSM 20124 / JCM 1332 / NBRC 12137 / NCIMB 8907 / NRRL B-2979 / 168) protein is C-glycoside deglycosidase alpha subunit.